The following is a 172-amino-acid chain: Shikimate kinase (172 aa).

11 to 16 (ASGKTE) serves as a coordination point for ATP. Residue Thr15 participates in Mg(2+) binding. 3 residues coordinate substrate: Asp33, Arg57, and Gly80. Arg120 contacts ATP. Residue Arg142 coordinates substrate.

Belongs to the shikimate kinase family. Monomer. The cofactor is Mg(2+).

It localises to the cytoplasm. The enzyme catalyses shikimate + ATP = 3-phosphoshikimate + ADP + H(+). The protein operates within metabolic intermediate biosynthesis; chorismate biosynthesis; chorismate from D-erythrose 4-phosphate and phosphoenolpyruvate: step 5/7. Catalyzes the specific phosphorylation of the 3-hydroxyl group of shikimic acid using ATP as a cosubstrate. The sequence is that of Shikimate kinase from Flavobacterium psychrophilum (strain ATCC 49511 / DSM 21280 / CIP 103535 / JIP02/86).